Reading from the N-terminus, the 507-residue chain is Aromatase (507 aa).

Cys-436 serves as a coordination point for heme.

This sequence belongs to the cytochrome P450 family. The cofactor is heme.

It localises to the membrane. It carries out the reaction testosterone + 3 reduced [NADPH--hemoprotein reductase] + 3 O2 = 17beta-estradiol + formate + 3 oxidized [NADPH--hemoprotein reductase] + 4 H2O + 4 H(+). It catalyses the reaction androst-4-ene-3,17-dione + 3 reduced [NADPH--hemoprotein reductase] + 3 O2 = estrone + formate + 3 oxidized [NADPH--hemoprotein reductase] + 4 H2O + 4 H(+). Its function is as follows. Catalyzes the formation of aromatic C18 estrogens from C19 androgens. The chain is Aromatase (CYP19A1) from Gallus gallus (Chicken).